We begin with the raw amino-acid sequence, 411 residues long: DNA polymerase IV (411 aa).

One can recognise a UmuC domain in the interval 18-211; the sequence is VVHVDMDCFY…LDVADLHGVG (194 aa). Residues aspartate 22 and aspartate 130 each contribute to the Mg(2+) site. Glutamate 131 is a catalytic residue. 2 disordered regions span residues 248–280 and 376–411; these read FHRR…GATE and GFSG…DEFT. Residues 253 to 274 are compositionally biased toward basic and acidic residues; it reads RGADSRPVEPRGKPKSLSRESS. The segment covering 384 to 402 has biased composition (gly residues); that stretch reads DGGGHEGGACGGAGRGSCG.

The protein belongs to the DNA polymerase type-Y family. In terms of assembly, monomer. Requires Mg(2+) as cofactor.

The protein resides in the cytoplasm. The catalysed reaction is DNA(n) + a 2'-deoxyribonucleoside 5'-triphosphate = DNA(n+1) + diphosphate. Functionally, poorly processive, error-prone DNA polymerase involved in untargeted mutagenesis. Copies undamaged DNA at stalled replication forks, which arise in vivo from mismatched or misaligned primer ends. These misaligned primers can be extended by PolIV. Exhibits no 3'-5' exonuclease (proofreading) activity. May be involved in translesional synthesis. This is DNA polymerase IV from Halobacterium salinarum (strain ATCC 29341 / DSM 671 / R1).